A 277-amino-acid polypeptide reads, in one-letter code: Large ribosomal subunit protein uL2 (277 aa).

The disordered stretch occupies residues 219–277 (TVRGSVMNPNDHPHGGGEGKAPVGRKAPSTPWGKPALGLKTRNKKAKSDKLIVRRRNEK). Residues 264-277 (AKSDKLIVRRRNEK) show a composition bias toward basic and acidic residues.

The protein belongs to the universal ribosomal protein uL2 family. As to quaternary structure, part of the 50S ribosomal subunit. Forms a bridge to the 30S subunit in the 70S ribosome.

Its function is as follows. One of the primary rRNA binding proteins. Required for association of the 30S and 50S subunits to form the 70S ribosome, for tRNA binding and peptide bond formation. It has been suggested to have peptidyltransferase activity; this is somewhat controversial. Makes several contacts with the 16S rRNA in the 70S ribosome. This chain is Large ribosomal subunit protein uL2, found in Streptococcus gordonii (strain Challis / ATCC 35105 / BCRC 15272 / CH1 / DL1 / V288).